A 145-amino-acid chain; its full sequence is D-aminoacyl-tRNA deacylase (145 aa).

The short motif at 137-138 is the Gly-cisPro motif, important for rejection of L-amino acids element; the sequence is GP.

It belongs to the DTD family. In terms of assembly, homodimer.

The protein resides in the cytoplasm. It carries out the reaction glycyl-tRNA(Ala) + H2O = tRNA(Ala) + glycine + H(+). It catalyses the reaction a D-aminoacyl-tRNA + H2O = a tRNA + a D-alpha-amino acid + H(+). An aminoacyl-tRNA editing enzyme that deacylates mischarged D-aminoacyl-tRNAs. Also deacylates mischarged glycyl-tRNA(Ala), protecting cells against glycine mischarging by AlaRS. Acts via tRNA-based rather than protein-based catalysis; rejects L-amino acids rather than detecting D-amino acids in the active site. By recycling D-aminoacyl-tRNA to D-amino acids and free tRNA molecules, this enzyme counteracts the toxicity associated with the formation of D-aminoacyl-tRNA entities in vivo and helps enforce protein L-homochirality. The polypeptide is D-aminoacyl-tRNA deacylase (Klebsiella pneumoniae subsp. pneumoniae (strain ATCC 700721 / MGH 78578)).